A 208-amino-acid polypeptide reads, in one-letter code: MTSSSSSPITFTLLLLLSLLVALNPNPSLASTGSNINTNDIVTQYSTYVRNACNVTRYNRLCVRTLWPFAIVARNNTSKWARASVAVTITDTKRVLRLLLKTQRSAVGESERIALSDCRELFVDSLDNLYKSLAVLRTLNADEFQRQISDLATWLSAALTDDDTCLDGFEETSSRTRTVRMVRRKATKCMRLCSNALALLKKLAFDGL.

The first 30 residues, 1-30 (MTSSSSSPITFTLLLLLSLLVALNPNPSLA), serve as a signal peptide directing secretion. Cysteines 53 and 62 form a disulfide. N-linked (GlcNAc...) asparagine glycans are attached at residues asparagine 54 and asparagine 75. The cysteines at positions 118 and 165 are disulfide-linked.

This sequence belongs to the PMEI family.

The protein resides in the secreted. The protein localises to the extracellular space. Its subcellular location is the apoplast. In terms of biological role, pectin methylesterase (PME) inhibitor that targets PME from seeds and modulates PME activity and pectin methylesterification during seed germination. Promotes mucilage release by limiting methylesterification of homogalacturonan in seed coat epidermal cells. The sequence is that of Pectinesterase inhibitor 6 from Arabidopsis thaliana (Mouse-ear cress).